The primary structure comprises 184 residues: Leucine-rich repeat-containing protein 20 (184 aa).

LRR repeat units follow at residues 51–72, 75–96, 98–120, 121–141, and 145–167; these read QIHL…FMTT, QLRE…VSAL, HLKA…TALP, ALET…EKLA, and ALRS…APPL. Position 175 is a phosphoserine (Ser175).

The polypeptide is Leucine-rich repeat-containing protein 20 (LRRC20) (Homo sapiens (Human)).